The sequence spans 1508 residues: Calponin homology domain-containing protein DDB_G0272472 (1508 aa).

Disordered regions lie at residues M1 to F165, D197 to P290, D309 to V518, A531 to D561, K680 to L706, and K1036 to A1391. Residues S81–S107 are compositionally biased toward low complexity. The segment covering P208 to F222 has biased composition (basic and acidic residues). Low complexity-rich tracts occupy residues K234–P251, F263–P290, and S315–P332. Basic and acidic residues-rich tracts occupy residues Q337–T346 and V362–T371. A compositionally biased stretch (polar residues) spans K380–E391. A compositionally biased stretch (low complexity) spans F395–S438. A compositionally biased stretch (polar residues) spans N439–Q452. Positions Q455 to K498 form a coiled coil. A compositionally biased stretch (basic and acidic residues) spans E465–K498. Low complexity-rich tracts occupy residues S500–S516 and A531–N557. Residues K1036–K1164 are compositionally biased toward basic and acidic residues. Composition is skewed to low complexity over residues E1165 to T1181 and D1189 to S1206. The span at S1216–T1225 shows a compositional bias: basic residues. The span at R1226 to R1235 shows a compositional bias: basic and acidic residues. The span at P1333–Q1355 shows a compositional bias: low complexity. The span at R1362–S1374 shows a compositional bias: polar residues. A Calponin-homology (CH) domain is found at M1397–K1504.

The polypeptide is Calponin homology domain-containing protein DDB_G0272472 (Dictyostelium discoideum (Social amoeba)).